Here is a 1442-residue protein sequence, read N- to C-terminus: CD109 antigen (1442 aa).

Positions 1-21 (MRSRRLLSAAHLLCLCAVALA) are cleaved as a signal peptide. Asn-67, Asn-117, Asn-246, Asn-278, Asn-370, and Asn-421 each carry an N-linked (GlcNAc...) asparagine glycan. The bait region (approximate) stretch occupies residues 595 to 704 (DKSVTLMENS…TWIWLDAYMG (110 aa)). Positions 923–926 (CGEQ) form a cross-link, isoglutamyl cysteine thioester (Cys-Gln). Residue Asn-1088 is glycosylated (N-linked (GlcNAc...) asparagine). Ala-1419 is lipidated: GPI-anchor amidated alanine. Residues 1420–1442 (TDSLRRSSSLLVFCSVLLYFVQH) constitute a propeptide, removed in mature form.

The protein belongs to the protease inhibitor I39 (alpha-2-macroglobulin) family. As to quaternary structure, heterodimer; disulfide-linked. Interacts with TGFB1 and TGFBR1. Forms a heteromeric complex with TGFBR1, TGFBR2 and TGFBR3 in a ligand-independent manner. In terms of processing, N-glycosylated. Post-translationally, 2 forms of 150 (p150) and 120 kDa (p120) exist due to proteolytic degradation from a 180 kDa form.

The protein localises to the cell membrane. Modulates negatively TGFB1 signaling in keratinocytes. The polypeptide is CD109 antigen (Cd109) (Mus musculus (Mouse)).